Consider the following 234-residue polypeptide: Small ribosomal subunit protein uS3 (234 aa).

In terms of domain architecture, KH type-2 spans 17–86 (VEKFLTKELK…SPQVEVQQVQ (70 aa)).

Belongs to the universal ribosomal protein uS3 family. Part of the 30S ribosomal subunit.

Binds the lower part of the 30S subunit head. This Methanoculleus marisnigri (strain ATCC 35101 / DSM 1498 / JR1) protein is Small ribosomal subunit protein uS3.